The following is a 1094-amino-acid chain: Protein phosphatase 2C and cyclic nucleotide-binding/kinase domain-containing protein (1094 aa).

One can recognise a PPM-type phosphatase domain in the interval arginine 107–isoleucine 397. Mn(2+) contacts are provided by aspartate 148, glycine 149, aspartate 344, and aspartate 388. A nucleoside 3',5'-cyclic phosphate is bound by residues leucine 491–aspartate 616 and leucine 617–serine 758. One can recognise a Protein kinase domain in the interval threonine 785–phenylalanine 1038. ATP is bound by residues threonine 791–valine 799 and lysine 811.

In the N-terminal section; belongs to the PP2C family. The protein in the C-terminal section; belongs to the protein kinase superfamily. AGC Ser/Thr protein kinase family. The cofactor is Mg(2+). Requires Mn(2+) as cofactor.

The catalysed reaction is O-phospho-L-seryl-[protein] + H2O = L-seryl-[protein] + phosphate. It catalyses the reaction O-phospho-L-threonyl-[protein] + H2O = L-threonyl-[protein] + phosphate. The sequence is that of Protein phosphatase 2C and cyclic nucleotide-binding/kinase domain-containing protein from Arabidopsis thaliana (Mouse-ear cress).